We begin with the raw amino-acid sequence, 399 residues long: La protein 2 (399 aa).

The 104-residue stretch at 3 to 106 (SSFNEETAKK…GRGTKLSKPE (104 aa)) folds into the HTH La-type RNA-binding domain. One can recognise an RRM domain in the interval 115 to 192 (RTLAASPFEY…ADLVLIPKSD (78 aa)). In terms of domain architecture, xRRM spans 269–399 (SLCKDNTDQL…QPTKKARKEP (131 aa)). The segment at 367–399 (AELEGGKEGHKKEKGKDECFENVQPTKKARKEP) is disordered. Basic and acidic residues predominate over residues 370 to 385 (EGGKEGHKKEKGKDEC).

In terms of tissue distribution, expressed ubiquitously (at protein level).

Its subcellular location is the nucleus. It is found in the nucleoplasm. It localises to the nucleolus. Functionally, binds to the 3' poly(U) terminus of nascent RNA polymerase III transcripts, protecting them from exonuclease digestion and facilitating their folding and maturation. The protein is La protein 2 (LA2) of Arabidopsis thaliana (Mouse-ear cress).